The primary structure comprises 408 residues: Tryptophan--tRNA ligase, chloroplastic/mitochondrial (408 aa).

The transit peptide at 1 to 52 directs the protein to the chloroplast and mitochondrion; the sequence is MGHATSLSHFLILSSSRFSRLGSLTRLLSKPTSLSGSFSSISVTGQGFRCCC. An N-acetylserine modification is found at Ser53. ATP is bound by residues Gln72 and 78-81; that span reads HLGN. The 'HIGH' region motif lies at 73–81; that stretch reads PTGSVHLGN. Asp197 serves as a coordination point for L-tryptophan. Residues 209-211, Val260, 269-273, and Lys272 contribute to the ATP site; these read GED and KMSKS. The short motif at 269 to 273 is the 'KMSKS' region element; the sequence is KMSKS.

It belongs to the class-I aminoacyl-tRNA synthetase family.

Its subcellular location is the plastid. The protein resides in the chloroplast. It localises to the mitochondrion. The catalysed reaction is tRNA(Trp) + L-tryptophan + ATP = L-tryptophyl-tRNA(Trp) + AMP + diphosphate + H(+). The chain is Tryptophan--tRNA ligase, chloroplastic/mitochondrial from Arabidopsis thaliana (Mouse-ear cress).